A 43-amino-acid polypeptide reads, in one-letter code: Defensin (43 aa).

Intrachain disulfides connect C3–C34, C20–C39, and C24–C41.

It localises to the secreted. Antibacterial peptide. Affects Gram-negative bacteria including methicillin-resistant Staphylococcus aureus. The polypeptide is Defensin (Trypoxylus dichotomus (Japanese rhinoceros beetle)).